Consider the following 290-residue polypeptide: uncharacterized protein (290 aa).

Residues 1–25 form the signal peptide; it reads MNKKSILSKTSLGSLFFLFGTALSA. Cysteine 26 is lipidated: N-palmitoyl cysteine. Cysteine 26 carries S-diacylglycerol cysteine lipidation. The segment at 183–203 is disordered; sequence GTDSKGSGSNNQNGGVTEKDF. Residues 186–197 are compositionally biased toward low complexity; sequence SKGSGSNNQNGG.

This sequence belongs to the MG439/MG440 family.

The protein localises to the cell membrane. This is an uncharacterized protein from Mycoplasma pneumoniae (strain ATCC 29342 / M129 / Subtype 1) (Mycoplasmoides pneumoniae).